The primary structure comprises 392 residues: Stilbene synthase 4 (392 aa).

A substrate-binding site is contributed by 55–58; sequence KFNR. The active site involves Cys164. Substrate is bound by residues Leu267 and 305 to 307; that span reads GGP.

Belongs to the thiolase-like superfamily. Chalcone/stilbene synthases family. As to quaternary structure, homodimer.

The protein localises to the cytoplasm. The catalysed reaction is 4-coumaroyl-CoA + 3 malonyl-CoA + 3 H(+) = trans-resveratrol + 4 CO2 + 4 CoA. It functions in the pathway phytoalexin biosynthesis; 3,4',5-trihydroxystilbene biosynthesis; 3,4',5-trihydroxystilbene from trans-4-coumarate: step 2/2. Its function is as follows. Mediates resistance to pathogens which are sensitive to stilbenes. In Vitis vinifera (Grape), this protein is Stilbene synthase 4.